We begin with the raw amino-acid sequence, 1119 residues long: Protein translocase subunit SecA (1119 aa).

ATP contacts are provided by residues Gln175, 213–217 (GEGKT), and Asp714. Residues Cys1106, Cys1108, Cys1117, and Cys1118 each coordinate Zn(2+).

This sequence belongs to the SecA family. Monomer and homodimer. Part of the essential Sec protein translocation apparatus which comprises SecA, SecYEG and auxiliary proteins SecDF. Other proteins may also be involved. Zn(2+) is required as a cofactor.

Its subcellular location is the cell inner membrane. It localises to the cytoplasm. It carries out the reaction ATP + H2O + cellular proteinSide 1 = ADP + phosphate + cellular proteinSide 2.. Its function is as follows. Part of the Sec protein translocase complex. Interacts with the SecYEG preprotein conducting channel. Has a central role in coupling the hydrolysis of ATP to the transfer of proteins into and across the cell membrane, serving as an ATP-driven molecular motor driving the stepwise translocation of polypeptide chains across the membrane. The sequence is that of Protein translocase subunit SecA from Azobacteroides pseudotrichonymphae genomovar. CFP2.